Reading from the N-terminus, the 347-residue chain is Quinolinate synthase (347 aa).

2 residues coordinate iminosuccinate: His47 and Ser68. Cys113 is a binding site for [4Fe-4S] cluster. Residues 139–141 (YAN) and Ser156 contribute to the iminosuccinate site. A [4Fe-4S] cluster-binding site is contributed by Cys200. Iminosuccinate contacts are provided by residues 226-228 (HPE) and Thr243. Cys297 lines the [4Fe-4S] cluster pocket.

The protein belongs to the quinolinate synthase family. Type 1 subfamily. Requires [4Fe-4S] cluster as cofactor.

It localises to the cytoplasm. It carries out the reaction iminosuccinate + dihydroxyacetone phosphate = quinolinate + phosphate + 2 H2O + H(+). The protein operates within cofactor biosynthesis; NAD(+) biosynthesis; quinolinate from iminoaspartate: step 1/1. Its function is as follows. Catalyzes the condensation of iminoaspartate with dihydroxyacetone phosphate to form quinolinate. This chain is Quinolinate synthase, found in Salmonella heidelberg (strain SL476).